The chain runs to 201 residues: dTTP/UTP pyrophosphatase (201 aa).

D76 functions as the Proton acceptor in the catalytic mechanism.

The protein belongs to the Maf family. YhdE subfamily. It depends on a divalent metal cation as a cofactor.

Its subcellular location is the cytoplasm. The enzyme catalyses dTTP + H2O = dTMP + diphosphate + H(+). The catalysed reaction is UTP + H2O = UMP + diphosphate + H(+). Its function is as follows. Nucleoside triphosphate pyrophosphatase that hydrolyzes dTTP and UTP. May have a dual role in cell division arrest and in preventing the incorporation of modified nucleotides into cellular nucleic acids. In Neisseria meningitidis serogroup A / serotype 4A (strain DSM 15465 / Z2491), this protein is dTTP/UTP pyrophosphatase.